Here is a 145-residue protein sequence, read N- to C-terminus: Immune protein Tsi3 (145 aa).

Positions 1-15 are cleaved as a signal peptide; it reads MKTVALILASLALLA. A lipid anchor (N-palmitoyl cysteine) is attached at C16. A lipid anchor (S-diacylglycerol cysteine) is attached at C16. The disordered stretch occupies residues 53-85; sequence FDEGGKLRNPRQLEVQRQDAPPPPDLASRRLGD. E126 provides a ligand contact to Ca(2+).

As to quaternary structure, forms a heterotetramer with Tse3 consisting of two Tse3 dimers and two Tsi3 dimers. Formation of the complex inactivates Tse3 enzymatic activity.

Functionally, immunity protein that plays a role in preventing early activation of toxin Tse3. Occupies Tse3 substrate binding site and prevents the substrate from entering. This Pseudomonas aeruginosa (strain ATCC 15692 / DSM 22644 / CIP 104116 / JCM 14847 / LMG 12228 / 1C / PRS 101 / PAO1) protein is Immune protein Tsi3.